The primary structure comprises 181 residues: Large ribosomal subunit protein uL5 (181 aa).

Belongs to the universal ribosomal protein uL5 family. Part of the 50S ribosomal subunit; part of the 5S rRNA/L5/L18/L25 subcomplex. Contacts the 5S rRNA and the P site tRNA. Forms a bridge to the 30S subunit in the 70S ribosome.

In terms of biological role, this is one of the proteins that bind and probably mediate the attachment of the 5S RNA into the large ribosomal subunit, where it forms part of the central protuberance. In the 70S ribosome it contacts protein S13 of the 30S subunit (bridge B1b), connecting the 2 subunits; this bridge is implicated in subunit movement. Contacts the P site tRNA; the 5S rRNA and some of its associated proteins might help stabilize positioning of ribosome-bound tRNAs. The polypeptide is Large ribosomal subunit protein uL5 (Helicobacter pylori (strain G27)).